Consider the following 1073-residue polypeptide: Carbamoyl phosphate synthase large chain (1073 aa).

Residues 2–403 are carboxyphosphate synthetic domain; the sequence is PKRTDIKSIL…SLQKALRGLE (402 aa). ATP is bound by residues R129, R169, G175, G176, E208, L210, E215, G241, I242, H243, Q285, and E299. The region spanning 133–328 is the ATP-grasp 1 domain; sequence DVAMKKIGLE…IAKVAAKLAV (196 aa). Residues Q285, E299, and N301 each contribute to the Mg(2+) site. Q285, E299, and N301 together coordinate Mn(2+). Residues 404–553 are oligomerization domain; it reads VGATGFDPKV…YSTYEEECEA (150 aa). The carbamoyl phosphate synthetic domain stretch occupies residues 554–936; it reads NPSTDREKIM…AFAKAQLGSN (383 aa). In terms of domain architecture, ATP-grasp 2 spans 679–870; sequence QHAVERLKLK…LAKVAARVMA (192 aa). 10 residues coordinate ATP: R715, H754, L756, E761, G786, V787, H788, S789, Q829, and E841. Mg(2+) contacts are provided by Q829, E841, and N843. Residues Q829, E841, and N843 each coordinate Mn(2+). The region spanning 937–1073 is the MGS-like domain; sequence STMKKHGRAL…SVQEMHAQIK (137 aa). Residues 937 to 1073 form an allosteric domain region; sequence STMKKHGRAL…SVQEMHAQIK (137 aa).

It belongs to the CarB family. As to quaternary structure, composed of two chains; the small (or glutamine) chain promotes the hydrolysis of glutamine to ammonia, which is used by the large (or ammonia) chain to synthesize carbamoyl phosphate. Tetramer of heterodimers (alpha,beta)4. It depends on Mg(2+) as a cofactor. Requires Mn(2+) as cofactor.

The catalysed reaction is hydrogencarbonate + L-glutamine + 2 ATP + H2O = carbamoyl phosphate + L-glutamate + 2 ADP + phosphate + 2 H(+). It carries out the reaction hydrogencarbonate + NH4(+) + 2 ATP = carbamoyl phosphate + 2 ADP + phosphate + 2 H(+). It functions in the pathway amino-acid biosynthesis; L-arginine biosynthesis; carbamoyl phosphate from bicarbonate: step 1/1. The protein operates within pyrimidine metabolism; UMP biosynthesis via de novo pathway; (S)-dihydroorotate from bicarbonate: step 1/3. Large subunit of the glutamine-dependent carbamoyl phosphate synthetase (CPSase). CPSase catalyzes the formation of carbamoyl phosphate from the ammonia moiety of glutamine, carbonate, and phosphate donated by ATP, constituting the first step of 2 biosynthetic pathways, one leading to arginine and/or urea and the other to pyrimidine nucleotides. The large subunit (synthetase) binds the substrates ammonia (free or transferred from glutamine from the small subunit), hydrogencarbonate and ATP and carries out an ATP-coupled ligase reaction, activating hydrogencarbonate by forming carboxy phosphate which reacts with ammonia to form carbamoyl phosphate. In Escherichia coli (strain K12), this protein is Carbamoyl phosphate synthase large chain.